We begin with the raw amino-acid sequence, 364 residues long: Succinyl-diaminopimelate desuccinylase (364 aa).

Histidine 64 contributes to the Zn(2+) binding site. The active site involves aspartate 66. Aspartate 95 contributes to the Zn(2+) binding site. Glutamate 125 acts as the Proton acceptor in catalysis. Residues glutamate 126, glutamate 154, and histidine 339 each coordinate Zn(2+).

Belongs to the peptidase M20A family. DapE subfamily. Homodimer. It depends on Zn(2+) as a cofactor. Co(2+) is required as a cofactor.

The catalysed reaction is N-succinyl-(2S,6S)-2,6-diaminopimelate + H2O = (2S,6S)-2,6-diaminopimelate + succinate. Its pathway is amino-acid biosynthesis; L-lysine biosynthesis via DAP pathway; LL-2,6-diaminopimelate from (S)-tetrahydrodipicolinate (succinylase route): step 3/3. In terms of biological role, catalyzes the hydrolysis of N-succinyl-L,L-diaminopimelic acid (SDAP), forming succinate and LL-2,6-diaminopimelate (DAP), an intermediate involved in the bacterial biosynthesis of lysine and meso-diaminopimelic acid, an essential component of bacterial cell walls. This chain is Succinyl-diaminopimelate desuccinylase, found in Nitratiruptor sp. (strain SB155-2).